The sequence spans 151 residues: Large ribosomal subunit protein uL13 (151 aa).

It belongs to the universal ribosomal protein uL13 family. In terms of assembly, part of the 50S ribosomal subunit.

In terms of biological role, this protein is one of the early assembly proteins of the 50S ribosomal subunit, although it is not seen to bind rRNA by itself. It is important during the early stages of 50S assembly. The sequence is that of Large ribosomal subunit protein uL13 from Petrotoga mobilis (strain DSM 10674 / SJ95).